Consider the following 309-residue polypeptide: Dihydroorotate dehydrogenase B (NAD(+)), catalytic subunit (309 aa).

Residues S21 and 45-46 (KA) each bind FMN. Substrate is bound by residues K45 and 69–73 (NAIGL). FMN is bound by residues N99 and N127. N127 is a binding site for substrate. The active-site Nucleophile is C130. Residues K165 and I191 each contribute to the FMN site. 192 to 193 (NT) provides a ligand contact to substrate. FMN contacts are provided by residues G217, 243–244 (GG), and 265–266 (GT).

It belongs to the dihydroorotate dehydrogenase family. Type 1 subfamily. Heterotetramer of 2 PyrK and 2 PyrD type B subunits. It depends on FMN as a cofactor.

The protein resides in the cytoplasm. It catalyses the reaction (S)-dihydroorotate + NAD(+) = orotate + NADH + H(+). It participates in pyrimidine metabolism; UMP biosynthesis via de novo pathway; orotate from (S)-dihydroorotate (NAD(+) route): step 1/1. In terms of biological role, catalyzes the conversion of dihydroorotate to orotate with NAD(+) as electron acceptor. This chain is Dihydroorotate dehydrogenase B (NAD(+)), catalytic subunit (pyrD), found in Bacillus cereus (strain ATCC 14579 / DSM 31 / CCUG 7414 / JCM 2152 / NBRC 15305 / NCIMB 9373 / NCTC 2599 / NRRL B-3711).